The primary structure comprises 2187 residues: Nascent polypeptide-associated complex subunit alpha, muscle-specific form (2187 aa).

Disordered regions lie at residues 1 to 20 (MPGEATETVPATEQELPQPQ), 32 to 73 (LKVA…STPF), and 172 to 196 (IPPLEPKTSTSQVPSQGTLNLKGTA). Over residues 9–20 (VPATEQELPQPQ) the composition is skewed to polar residues. Positions 178-192 (KTSTSQVPSQGTLNL) are enriched in polar residues. Position 247 is an asymmetric dimethylarginine (arginine 247). Disordered regions lie at residues 335–370 (DSGAAPSDDKGSSAVTNELCSPPGSSNVAGTSLSPK), 579–611 (NTVSQPLKRSVTDPAMAPRTAKNTAPSTTSPLV), 738–835 (PKGS…PKDT), 884–1847 (KETL…PVEK), and 1892–2053 (PEAV…KAMS). Residues 347 to 369 (SAVTNELCSPPGSSNVAGTSLSP) are compositionally biased toward polar residues. The residue at position 590 (threonine 590) is a Phosphothreonine. Composition is skewed to polar residues over residues 599–609 (AKNTAPSTTSP), 818–835 (VTPTSPKKTSATAVPKDT), and 887–905 (LATSIPKVTSPSPQKTPKS). Serine 822 carries the phosphoserine modification. Positions 941–951 (PHVPPTSPPKS) are enriched in pro residues. The span at 976–998 (TPTYPKKSPKPAASKKTPATPSP) shows a compositional bias: low complexity. Residues 1106 to 1122 (TPQNATPNESLAASSQK) show a composition bias toward polar residues. Residues serine 1174 and serine 1177 each carry the phosphoserine modification. Over residues 1174-1195 (SPLSPKKASKTAAPKEAPATPS) the composition is skewed to low complexity. A Phosphothreonine modification is found at threonine 1364. Serine 1368 and serine 1392 each carry phosphoserine. At threonine 1398 the chain carries Phosphothreonine. Serine 1400 and serine 1423 each carry phosphoserine. Over residues 1429 to 1440 (VTPSSKKLSQTV) the composition is skewed to polar residues. Residues 1489–1504 (SPSSPKKAPKTAAPPS) are compositionally biased toward low complexity. Residue serine 1492 is modified to Phosphoserine. Residues 1609–1631 (PVTTSLAQTAPPSLQKAPSTTIP) show a composition bias toward polar residues. 2 stretches are compositionally biased toward low complexity: residues 1636–1670 (AAPAVLPVSSKSPAAPAAASASLSPATAAPQTAPK) and 1714–1727 (SSPPKKASSSKRAS). Polar residues predominate over residues 1762–1772 (ACSTGTTTPQA). Composition is skewed to low complexity over residues 1806-1823 (KSPGANSNSASSPKCPDP) and 1892-1914 (PEAVSASVAPKPAPAASLTLAPS). The PXLXP signature appears at 1950-1954 (PPLIP). Positions 1973–1983 (APKPAGTPAPA) are enriched in pro residues. The segment covering 2001-2014 (SDSDESVPELEEQD) has biased composition (acidic residues). Serine 2015 carries the phosphoserine; by ILK1 modification. Residues 2016–2029 (TQTATQQAQLAAAA) show a composition bias toward low complexity. The tract at residues 2041 to 2052 (QSRSEKKARKAM) is required for DNA-binding. Positions 2042 to 2107 (SRSEKKARKA…AKIEDLSQQA (66 aa)) constitute an NAC-A/B domain. At serine 2104 the chain carries Phosphoserine. Lysine 2114 carries the N6-acetyllysine; alternate modification. Lysine 2114 participates in a covalent cross-link: Glycyl lysine isopeptide (Lys-Gly) (interchain with G-Cter in SUMO2); alternate. Threonine 2131 is modified (phosphothreonine; by GSK3-beta). Threonine 2133 carries the post-translational modification Phosphothreonine. Serine 2138, serine 2158, serine 2163, and serine 2175 each carry phosphoserine. The UBA domain maps to 2148-2185 (VEVKDIELVMSQANVSRAKAVRALKNNSNDIVNAIMEL).

The protein belongs to the NAC-alpha family. In terms of assembly, interacts (via PXLXP motif) with the muscle-restricted histone methyltransferase SMYD1 (via MYND-type zinc finger). Phosphorylation of Ser-2015 by ILK during cell adhesion may promote nuclear localization. Phosphorylation of Thr-2131 by GSK3B may promote proteasome mediated degradation. Specifically expressed in heart and skeletal muscle: it is present in differentiated myotubes but not in myoblasts.

The protein localises to the cytoplasm. It is found in the nucleus. Its function is as follows. Cardiac- and muscle-specific transcription factor. May act to regulate the expression of genes involved in the development of myotubes. Plays a critical role in ventricular cardiomyocyte expansion and regulates postnatal skeletal muscle growth and regeneration. Involved in the organized assembly of thick and thin filaments of myofibril sarcomeres. The protein is Nascent polypeptide-associated complex subunit alpha, muscle-specific form (Naca) of Mus musculus (Mouse).